We begin with the raw amino-acid sequence, 291 residues long: Polyamine aminopropyltransferase (291 aa).

The 241-residue stretch at 5-245 (PGPVSLIEPL…YAVNYIIGSL (241 aa)) folds into the PABS domain. Gln36 contributes to the S-methyl-5'-thioadenosine binding site. Positions 67 and 91 each coordinate spermidine. S-methyl-5'-thioadenosine is bound by residues Asp111 and 143 to 144 (DG). Catalysis depends on Asp164, which acts as the Proton acceptor.

The protein belongs to the spermidine/spermine synthase family. Homodimer or homotetramer.

It is found in the cytoplasm. It catalyses the reaction S-adenosyl 3-(methylsulfanyl)propylamine + putrescine = S-methyl-5'-thioadenosine + spermidine + H(+). Its pathway is amine and polyamine biosynthesis; spermidine biosynthesis; spermidine from putrescine: step 1/1. Catalyzes the irreversible transfer of a propylamine group from the amino donor S-adenosylmethioninamine (decarboxy-AdoMet) to putrescine (1,4-diaminobutane) to yield spermidine. This Pyrobaculum islandicum (strain DSM 4184 / JCM 9189 / GEO3) protein is Polyamine aminopropyltransferase.